The sequence spans 359 residues: Maleylacetate reductase 2 (359 aa).

This sequence belongs to the iron-containing alcohol dehydrogenase family. In terms of assembly, homodimer.

It carries out the reaction 3-oxoadipate + NAD(+) = maleylacetate + NADH + H(+). It catalyses the reaction 3-oxoadipate + NADP(+) = maleylacetate + NADPH + H(+). It functions in the pathway aromatic compound metabolism; 3-chlorocatechol degradation. Its activity is regulated as follows. Inhibited by p-chloromercuribenzoate and by 3-oxoadipate, and, in a temperature-dependent manner, by manganese. In terms of biological role, plays a major role in the degradation of chloroaromatic compounds by channeling maleylacetate and some of its substituted derivatives into the 3-oxoadipate pathway. This enzyme converts maleylacetate and 2-chloromaleylacetate with similar efficiencies. NADH is preferred to NADPH as the cosubstrate. This is Maleylacetate reductase 2 (tfdFII) from Cupriavidus pinatubonensis (strain JMP 134 / LMG 1197) (Cupriavidus necator (strain JMP 134)).